A 273-amino-acid polypeptide reads, in one-letter code: Undecaprenyl-diphosphatase (273 aa).

8 helical membrane-spanning segments follow: residues 13-35, 45-65, 90-110, 116-136, 157-177, 190-210, 222-242, and 252-272; these read LGVV…IIVG, ANTF…VMFW, LSLI…LIFH, LFNP…LIAA, AFVI…RSGA, YAAS…ATVL, GDVP…LIAI, and ISFI…YVVF.

It belongs to the UppP family.

It localises to the cell inner membrane. The catalysed reaction is di-trans,octa-cis-undecaprenyl diphosphate + H2O = di-trans,octa-cis-undecaprenyl phosphate + phosphate + H(+). Catalyzes the dephosphorylation of undecaprenyl diphosphate (UPP). Confers resistance to bacitracin. This is Undecaprenyl-diphosphatase from Klebsiella pneumoniae subsp. pneumoniae (strain ATCC 700721 / MGH 78578).